The following is a 357-amino-acid chain: 2-oxoglutarate-dependent dioxygenase 11 (357 aa).

The Fe2OG dioxygenase domain occupies 207-307; that stretch reads QPRGLRMAYY…RISAALFHYP (101 aa). 3 residues coordinate Fe cation: His-231, Asp-233, and His-288. Arg-298 is a binding site for 2-oxoglutarate.

The protein belongs to the iron/ascorbate-dependent oxidoreductase family. The cofactor is Fe(2+). It depends on L-ascorbate as a cofactor. As to expression, expressed in shoots.

It localises to the cytoplasm. It catalyses the reaction melatonin + 2-oxoglutarate + O2 = 2-hydroxymelatonin + succinate + CO2. Its function is as follows. Involved in melatonin degradation. Catalyzes the hydroxylation of melatonin to produce 2-hydroxymelatonin. The chain is 2-oxoglutarate-dependent dioxygenase 11 from Oryza sativa subsp. japonica (Rice).